We begin with the raw amino-acid sequence, 678 residues long: Proprotein convertase subtilisin/kexin type 4 (678 aa).

A signal peptide spans 1–26; sequence MRPSQTALWLGLVLSLALLAVGWASA. Positions 27-110 are excised as a propeptide; it reads RPPIYVSSWA…QQTLRRRVKR (84 aa). The Peptidase S8 domain maps to 123-437; it reads QWYMNKEIEQ…YGLLDAGLLV (315 aa). Active-site charge relay system residues include Asp-155, His-196, and Ser-370. Residues 446-580 enclose the P/Homo B domain; the sequence is TKPQKKCTIR…TLLLYGTAED (135 aa). The N-linked (GlcNAc...) asparagine glycan is linked to Asn-472.

It belongs to the peptidase S8 family. Furin subfamily. The proPCSK4 form interacts with HSPA5; the interaction takes place at the endoplasmic reticulum. Post-translationally, N-glycosylated. Synthesized in the endoplasmic reticulum as a zymogen, is matured by autocatalytic cleavage between the prodomain and the catalytic domain. As to expression, expressed abundantly in the testis. High levels seen in germ cells but not in Leydig, Sertoli or peritubular cells. Expressed in the pachytene spermatocytes and the round spermatids but not in the elongating spermatids. May be expressed within hormonally stimulated ovaries.

It is found in the cytoplasmic vesicle. It localises to the secretory vesicle. Its subcellular location is the acrosome membrane. In terms of biological role, proprotein convertase involved in the processing of hormone and other protein precursors at sites comprised of pairs of basic amino acid residues. In males, important for ADAM2 processing as well as other acrosomal proteins with roles in fertilization and critical for normal fertilization events such as sperm capacitation, acrosome reaction and binding of sperm to zona pellucida. Plays also a role in female fertility, involved in the regulation of trophoblast migration and placental development, may be through the proteolytical processing and activation of proteins such as IGF2. May also participate in folliculogenesis in the ovaries. This Rattus norvegicus (Rat) protein is Proprotein convertase subtilisin/kexin type 4 (Pcsk4).